We begin with the raw amino-acid sequence, 134 residues long: Perlwapin (134 aa).

3 WAP domains span residues 2 to 45, 46 to 89, and 90 to 132; these read GPNL…CVPK, PKPG…YRPE, and KPGS…EKPC. 12 disulfides stabilise this stretch: Cys-8/Cys-34, Cys-17/Cys-38, Cys-21/Cys-33, Cys-27/Cys-42, Cys-51/Cys-77, Cys-59/Cys-82, Cys-64/Cys-76, Cys-70/Cys-85, Cys-94/Cys-121, Cys-104/Cys-124, Cys-108/Cys-120, and Cys-114/Cys-128.

Nacreous layer of shell.

Its function is as follows. Inhibits growth of calcium carbonate crystals. May inhibit growth of certain crystallographic planes in the mineral phase of nacre in the shell. The chain is Perlwapin from Haliotis laevigata (Smooth Australian abalone).